We begin with the raw amino-acid sequence, 215 residues long: MRLEAENLAGERGGETIFSHLSFTIGTGQALVVTGPNGSGKSTLLRIICGLLAPEAGEVKLTEGTQIVPVRAACHYLGHQNAMKPALSVRENLLFWQKFNGGEALDIGAALEAVDLAGVEHLPFGYLSTGQKRRVSIAKLLVSHRPLWIVDEPTAGLDKASEARFAELMREHMRQDGMIIAATHIPLGLDGAISTTGNGLVRSLDMAAFSVEDIA.

Residues 3–215 (LEAENLAGER…MAAFSVEDIA (213 aa)) form the ABC transporter domain. 35 to 42 (GPNGSGKS) contributes to the ATP binding site.

This sequence belongs to the ABC transporter superfamily. CcmA exporter (TC 3.A.1.107) family. As to quaternary structure, the complex is composed of two ATP-binding proteins (CcmA) and two transmembrane proteins (CcmB).

The protein localises to the cell inner membrane. It carries out the reaction heme b(in) + ATP + H2O = heme b(out) + ADP + phosphate + H(+). Functionally, part of the ABC transporter complex CcmAB involved in the biogenesis of c-type cytochromes; once thought to export heme, this seems not to be the case, but its exact role is uncertain. Responsible for energy coupling to the transport system. The protein is Cytochrome c biogenesis ATP-binding export protein CcmA of Brucella melitensis biotype 1 (strain ATCC 23456 / CCUG 17765 / NCTC 10094 / 16M).